Consider the following 88-residue polypeptide: Small ribosomal subunit protein bS20 (88 aa).

It belongs to the bacterial ribosomal protein bS20 family.

Functionally, binds directly to 16S ribosomal RNA. The protein is Small ribosomal subunit protein bS20 of Desulforamulus reducens (strain ATCC BAA-1160 / DSM 100696 / MI-1) (Desulfotomaculum reducens).